Here is a 301-residue protein sequence, read N- to C-terminus: Peptidyl-prolyl cis-trans isomerase E (301 aa).

The 79-residue stretch at 5 to 83 (KRVLYVGGLA…GRTIRVNLAK (79 aa)) folds into the RRM domain. A phosphoserine mark is found at Ser91, Ser97, and Ser119. Residues 107–140 (GKTLEENKEEEGSEPPKAETQEGEPAAKKARSNP) form a disordered region. A PPIase cyclophilin-type domain is found at 143-299 (YMDIKIGNKP…QKVIIADCGE (157 aa)).

The protein belongs to the cyclophilin-type PPIase family. PPIase E subfamily. In terms of assembly, identified in the spliceosome C complex. Component of the XAB2 complex, a multimeric protein complex composed of XAB2, PRPF19, AQR, ZNF830, ISY1, and PPIE. Identified in a pentameric intron-binding (IB) complex composed of AQR, XAB2, ISY1, ZNF830 and PPIE that is incorporated into the spliceosome as a preassembled complex. The IB complex does not contain PRPF19. Interacts (via RNA-binding domain) with KMT2A (via the third PHD-type zinc-finger).

Its subcellular location is the nucleus. It carries out the reaction [protein]-peptidylproline (omega=180) = [protein]-peptidylproline (omega=0). Involved in pre-mRNA splicing as component of the spliceosome. Combines RNA-binding and PPIase activities. Binds mRNA and has a preference for single-stranded RNA molecules with poly-A and poly-U stretches, suggesting it binds to the poly(A)-region in the 3'-UTR of mRNA molecules. Catalyzes the cis-trans isomerization of proline imidic peptide bonds in proteins. Inhibits KMT2A activity; this requires proline isomerase activity. The sequence is that of Peptidyl-prolyl cis-trans isomerase E (PPIE) from Pongo abelii (Sumatran orangutan).